We begin with the raw amino-acid sequence, 184 residues long: Large ribosomal subunit protein uL5 (184 aa).

Belongs to the universal ribosomal protein uL5 family. In terms of assembly, part of the 50S ribosomal subunit; part of the 5S rRNA/L5/L18/L25 subcomplex. Contacts the 5S rRNA and the P site tRNA. Forms a bridge to the 30S subunit in the 70S ribosome.

Its function is as follows. This is one of the proteins that bind and probably mediate the attachment of the 5S RNA into the large ribosomal subunit, where it forms part of the central protuberance. In the 70S ribosome it contacts protein S13 of the 30S subunit (bridge B1b), connecting the 2 subunits; this bridge is implicated in subunit movement. Contacts the P site tRNA; the 5S rRNA and some of its associated proteins might help stabilize positioning of ribosome-bound tRNAs. In Ureaplasma parvum serovar 3 (strain ATCC 27815 / 27 / NCTC 11736), this protein is Large ribosomal subunit protein uL5.